We begin with the raw amino-acid sequence, 235 residues long: Purine nucleoside phosphorylase DeoD-type (235 aa).

His4 contributes to the a purine D-ribonucleoside binding site. Phosphate contacts are provided by residues Gly20, Arg24, Arg43, and 87–90; that span reads RVGT. A purine D-ribonucleoside is bound by residues 179–181 and 203–204; these read EME and SN.

Belongs to the PNP/UDP phosphorylase family. In terms of assembly, homohexamer; trimer of homodimers.

The enzyme catalyses a purine D-ribonucleoside + phosphate = a purine nucleobase + alpha-D-ribose 1-phosphate. It catalyses the reaction a purine 2'-deoxy-D-ribonucleoside + phosphate = a purine nucleobase + 2-deoxy-alpha-D-ribose 1-phosphate. Its function is as follows. Catalyzes the reversible phosphorolytic breakdown of the N-glycosidic bond in the beta-(deoxy)ribonucleoside molecules, with the formation of the corresponding free purine bases and pentose-1-phosphate. The sequence is that of Purine nucleoside phosphorylase DeoD-type from Levilactobacillus brevis (strain ATCC 367 / BCRC 12310 / CIP 105137 / JCM 1170 / LMG 11437 / NCIMB 947 / NCTC 947) (Lactobacillus brevis).